The primary structure comprises 1328 residues: ATP-dependent DNA helicase hus2/rqh1 (1328 aa).

2 stretches are compositionally biased toward low complexity: residues 217 to 236 and 244 to 254; these read NNLPFPRLNNNNTNNNNDNN and ASPTPSSVSSQ. Residues 217 to 254 form a disordered region; it reads NNLPFPRLNNNNTNNNNDNNAIEKRDSASPTPSSVSSQ. In terms of domain architecture, Helicase ATP-binding spans 528-707; the sequence is INGTLSGKDV…INTLRMENCL (180 aa). 555 to 562 contributes to the ATP binding site; the sequence is AVIEGGAS. The short motif at 651–654 is the DEAH box element; that stretch reads DEAH. The Helicase C-terminal domain maps to 728-876; it reads LYTELYRFIS…ETKERQRQML (149 aa). The HRDC domain occupies 1115–1195; that stretch reads IDVMTRCLKD…QKFIDEKEQN (81 aa). Disordered regions lie at residues 1224–1247 and 1260–1328; these read EQGFSDDSDSVYEPSSPIEEGDEE and NSQS…QNYR. Residues 1260–1269 show a composition bias toward polar residues; it reads NSQSLTQTGS. A compositionally biased stretch (basic residues) spans 1283–1300; sequence KSYRHKRGSTSYSRKRKY.

This sequence belongs to the helicase family. RecQ subfamily. As to quaternary structure, interacts with top3.

It is found in the nucleus. The enzyme catalyses Couples ATP hydrolysis with the unwinding of duplex DNA by translocating in the 3'-5' direction.. The catalysed reaction is ATP + H2O = ADP + phosphate + H(+). ATP-dependent 3'-5' DNA-helicase. Has a role in the repair of UV-induced DNA damage in G2 via recombination-mediated repair. Also has a role in the repair of infrared-induced double DNA strand breaks. In Schizosaccharomyces pombe (strain 972 / ATCC 24843) (Fission yeast), this protein is ATP-dependent DNA helicase hus2/rqh1.